Here is a 335-residue protein sequence, read N- to C-terminus: L-tyrosine isonitrile synthase (335 aa).

The protein belongs to the isocyanide synthase family.

It carries out the reaction D-ribulose 5-phosphate + L-tyrosine = (2S)-3-(4-hydroxyphenyl)-2-isocyanopropanoate + hydroxyacetone + formaldehyde + phosphate + H2O + H(+). Its function is as follows. Involved in the biosynthesis of rhabduscin, a tyrosine derivative which is a potent inhibitor of phenoloxidase, a key component of the insect's innate immune system. Responsible for the synthesis of the isonitrile group on tyrosine using the C2 of ribulose 5-phosphate as the source of the carbon atom. This Xenorhabdus nematophila (strain ATCC 19061 / DSM 3370 / CCUG 14189 / LMG 1036 / NCIMB 9965 / AN6) protein is L-tyrosine isonitrile synthase.